We begin with the raw amino-acid sequence, 542 residues long: Chaperonin GroEL (542 aa).

ATP is bound by residues 29-32, 86-90, G413, 476-478, and D492; these read TLGP, DGTTT, and NAA.

It belongs to the chaperonin (HSP60) family. As to quaternary structure, forms a cylinder of 14 subunits composed of two heptameric rings stacked back-to-back. Interacts with the co-chaperonin GroES.

It is found in the cytoplasm. It carries out the reaction ATP + H2O + a folded polypeptide = ADP + phosphate + an unfolded polypeptide.. Its function is as follows. Together with its co-chaperonin GroES, plays an essential role in assisting protein folding. The GroEL-GroES system forms a nano-cage that allows encapsulation of the non-native substrate proteins and provides a physical environment optimized to promote and accelerate protein folding. This chain is Chaperonin GroEL, found in Lactococcus lactis subsp. cremoris (strain MG1363).